The sequence spans 123 residues: Small ribosomal subunit protein uS12 (123 aa).

The residue at position 89 (Asp-89) is a 3-methylthioaspartic acid.

It belongs to the universal ribosomal protein uS12 family. As to quaternary structure, part of the 30S ribosomal subunit. Contacts proteins S8 and S17. May interact with IF1 in the 30S initiation complex.

Its function is as follows. With S4 and S5 plays an important role in translational accuracy. Interacts with and stabilizes bases of the 16S rRNA that are involved in tRNA selection in the A site and with the mRNA backbone. Located at the interface of the 30S and 50S subunits, it traverses the body of the 30S subunit contacting proteins on the other side and probably holding the rRNA structure together. The combined cluster of proteins S8, S12 and S17 appears to hold together the shoulder and platform of the 30S subunit. The polypeptide is Small ribosomal subunit protein uS12 (Caulobacter sp. (strain K31)).